The following is a 392-amino-acid chain: Histidinol-phosphate aminotransferase 2 (392 aa).

Residue Lys228 is modified to N6-(pyridoxal phosphate)lysine.

It belongs to the class-II pyridoxal-phosphate-dependent aminotransferase family. Histidinol-phosphate aminotransferase subfamily. Homodimer. Pyridoxal 5'-phosphate serves as cofactor.

It catalyses the reaction L-histidinol phosphate + 2-oxoglutarate = 3-(imidazol-4-yl)-2-oxopropyl phosphate + L-glutamate. It participates in amino-acid biosynthesis; L-histidine biosynthesis; L-histidine from 5-phospho-alpha-D-ribose 1-diphosphate: step 7/9. This Nitrosospira multiformis (strain ATCC 25196 / NCIMB 11849 / C 71) protein is Histidinol-phosphate aminotransferase 2.